The primary structure comprises 167 residues: 3-isopropylmalate dehydratase small subunit (167 aa).

The protein belongs to the LeuD family. LeuD type 2 subfamily. In terms of assembly, heterodimer of LeuC and LeuD.

The enzyme catalyses (2R,3S)-3-isopropylmalate = (2S)-2-isopropylmalate. It participates in amino-acid biosynthesis; L-leucine biosynthesis; L-leucine from 3-methyl-2-oxobutanoate: step 2/4. Functionally, catalyzes the isomerization between 2-isopropylmalate and 3-isopropylmalate, via the formation of 2-isopropylmaleate. The chain is 3-isopropylmalate dehydratase small subunit from Oleidesulfovibrio alaskensis (strain ATCC BAA-1058 / DSM 17464 / G20) (Desulfovibrio alaskensis).